We begin with the raw amino-acid sequence, 175 residues long: GTP-dependent dephospho-CoA kinase (175 aa).

Positions 48, 49, 50, 66, and 124 each coordinate GTP.

Belongs to the GTP-dependent DPCK family.

It carries out the reaction 3'-dephospho-CoA + GTP = GDP + CoA + H(+). It participates in cofactor biosynthesis; coenzyme A biosynthesis. Catalyzes the GTP-dependent phosphorylation of the 3'-hydroxyl group of dephosphocoenzyme A to form coenzyme A (CoA). This Thermofilum pendens (strain DSM 2475 / Hrk 5) protein is GTP-dependent dephospho-CoA kinase.